Consider the following 331-residue polypeptide: L-lactate dehydrogenase A chain (331 aa).

NAD(+)-binding positions include 29–57 (GMVG…MEDK) and Arg98. Positions 105, 137, and 168 each coordinate substrate. Asn137 provides a ligand contact to NAD(+). Catalysis depends on His192, which acts as the Proton acceptor. Thr247 provides a ligand contact to substrate.

Belongs to the LDH/MDH superfamily. LDH family. As to quaternary structure, homotetramer.

The protein resides in the cytoplasm. It carries out the reaction (S)-lactate + NAD(+) = pyruvate + NADH + H(+). Its pathway is fermentation; pyruvate fermentation to lactate; (S)-lactate from pyruvate: step 1/1. Functionally, interconverts simultaneously and stereospecifically pyruvate and lactate with concomitant interconversion of NADH and NAD(+). The protein is L-lactate dehydrogenase A chain (ldha) of Dissostichus mawsoni (Antarctic cod).